A 157-amino-acid polypeptide reads, in one-letter code: SsrA-binding protein (157 aa).

This sequence belongs to the SmpB family.

It is found in the cytoplasm. In terms of biological role, required for rescue of stalled ribosomes mediated by trans-translation. Binds to transfer-messenger RNA (tmRNA), required for stable association of tmRNA with ribosomes. tmRNA and SmpB together mimic tRNA shape, replacing the anticodon stem-loop with SmpB. tmRNA is encoded by the ssrA gene; the 2 termini fold to resemble tRNA(Ala) and it encodes a 'tag peptide', a short internal open reading frame. During trans-translation Ala-aminoacylated tmRNA acts like a tRNA, entering the A-site of stalled ribosomes, displacing the stalled mRNA. The ribosome then switches to translate the ORF on the tmRNA; the nascent peptide is terminated with the 'tag peptide' encoded by the tmRNA and targeted for degradation. The ribosome is freed to recommence translation, which seems to be the essential function of trans-translation. This Methylobacterium nodulans (strain LMG 21967 / CNCM I-2342 / ORS 2060) protein is SsrA-binding protein.